A 175-amino-acid polypeptide reads, in one-letter code: MIISTSRFGQVELKQEDVLTFTEGLLGFADLRKFVLLDDPNDEIFAWLQSCEAPAIAFPVLEPELFAPQYKATLTKGDMEALKLTAQDKARYFSIVTIPDDPTLMTANLKAPVVVNIEARTARQCVLQDNNLAIREPIFTKLQQRVVQNPAVAIKNQSTGIDVATKLHVVRDAEL.

The protein belongs to the FliW family. As to quaternary structure, interacts with translational regulator CsrA and flagellin(s).

Its subcellular location is the cytoplasm. Its function is as follows. Acts as an anti-CsrA protein, binds CsrA and prevents it from repressing translation of its target genes, one of which is flagellin. Binds to flagellin and participates in the assembly of the flagellum. The polypeptide is Flagellar assembly factor FliW (Bdellovibrio bacteriovorus (strain ATCC 15356 / DSM 50701 / NCIMB 9529 / HD100)).